Reading from the N-terminus, the 267-residue chain is Hydrolase FUB4 (267 aa).

Active-site charge relay system residues include Ser93, Asp183, and His243.

It belongs to the AB hydrolase 3 family.

Its pathway is mycotoxin biosynthesis. In terms of biological role, hydrolase; part of the gene cluster that mediates the biosynthesis of fusaric acid, a mycotoxin with low to moderate toxicity to animals and humans, but with high phytotoxic properties. L-aspartate is suggested as fusaric acid amino acid precursor that is activated and further processed to O-acetyl-L-homoserine by cluster enzymes aspartate kinase FUB3 and homoserine O-acetyltransferase FUB5, as well as enzymes of the primary metabolism. The polyketide synthase (PKS) FUB1 generates the triketide trans-2-hexenal which is presumptively released by the hydrolase FUB4 and linked to the NRPS-bound amino acid precursor by NAD(P)-dependent dehydrogenase FUB6. FUB1, FUB4, and the non-canonical NRPS Fub8 may form an enzyme complex. Further processing of the NRPS-bound intermediate might be carried out by FUB6 and the sulfhydrylase FUB7, enabling a spontaneous electrocyclization to close the carbon backbone of fusaric acid. Dihydrofusaric acid is likely to be released via reduction by the thioester reductase (TR) domain of FUB8 whereupon the final oxidation to fusaric acid may (also) be performed by the FMN-dependent dehydrogenase FUB9. This chain is Hydrolase FUB4, found in Fusarium oxysporum f. sp. lycopersici (strain 4287 / CBS 123668 / FGSC 9935 / NRRL 34936) (Fusarium vascular wilt of tomato).